The following is a 366-amino-acid chain: Proline-rich protein 19 (366 aa).

Disordered stretches follow at residues 1-53 (MDPR…RDPC), 102-149 (ESHT…DLPV), 256-286 (TPAHRGSQVQPPGHQLPFLSSASSPSGAAWG), and 301-338 (ATPPPPPPQPWDVRPPQPLPQPPSPLLPRTSALDWSPN). Residues 18-29 (GRIRRRKTRRER) show a composition bias toward basic residues. Composition is skewed to polar residues over residues 104 to 113 (HTPQLPTKPS) and 256 to 265 (TPAHRGSQVQ). The span at 275-286 (SSASSPSGAAWG) shows a compositional bias: low complexity. The segment covering 302 to 326 (TPPPPPPQPWDVRPPQPLPQPPSPL) has biased composition (pro residues).

In terms of assembly, interacts with CNTD1. Preferentially expressed in gonads.

The protein localises to the nucleus. Its subcellular location is the chromosome. Promotes meiotic crossing over formation through its interaction with CNTD1 by participating in the crossover differentiation step of crossover-specific recombination intermediates. The polypeptide is Proline-rich protein 19 (Mus musculus (Mouse)).